The following is a 414-amino-acid chain: DNA primase large subunit PriL (414 aa).

[4Fe-4S] cluster contacts are provided by cysteine 251, cysteine 352, cysteine 370, and cysteine 376.

Belongs to the eukaryotic-type primase large subunit family. Heterodimer of a small subunit (PriS) and a large subunit (PriL). The cofactor is [4Fe-4S] cluster.

Regulatory subunit of DNA primase, an RNA polymerase that catalyzes the synthesis of short RNA molecules used as primers for DNA polymerase during DNA replication. Stabilizes and modulates the activity of the small subunit, increasing the rate of DNA synthesis, and conferring RNA synthesis capability. The DNA polymerase activity may enable DNA primase to also catalyze primer extension after primer synthesis. May also play a role in DNA repair. The protein is DNA primase large subunit PriL of Methanocaldococcus jannaschii (strain ATCC 43067 / DSM 2661 / JAL-1 / JCM 10045 / NBRC 100440) (Methanococcus jannaschii).